Consider the following 1155-residue polypeptide: Probable translation initiation factor IF-2 (1155 aa).

In terms of domain architecture, DOD-type homing endonuclease spans 237 to 367 (FAGVMFGDGC…LSILLLRFEI (131 aa)). The tr-type G domain maps to 561 to 781 (TTETHNFIAN…VAGLAQKFLE (221 aa)). GTP is bound by residues 634-638 (DTPGH) and 688-691 (NKID).

It belongs to the TRAFAC class translation factor GTPase superfamily. Classic translation factor GTPase family. IF-2 subfamily. This protein undergoes a protein self splicing that involves a post-translational excision of the intervening region (intein) followed by peptide ligation.

Functionally, function in general translation initiation by promoting the binding of the formylmethionine-tRNA to ribosomes. Seems to function along with eIF-2. The protein is Probable translation initiation factor IF-2 (infB) of Methanocaldococcus jannaschii (strain ATCC 43067 / DSM 2661 / JAL-1 / JCM 10045 / NBRC 100440) (Methanococcus jannaschii).